The sequence spans 156 residues: MRTPSKQEDLVKAFKALLKEEKFSSQGEIVTALLEEGFENINQSKVSRMLTKFGAVRTRNAKMEMVYCLPAELGVPTATSPLKNLVLDVDYNHPIVVIRTSPGAAQLIARLLDSLGKSEGILGSIAGDDTIFVTLTRDSTTEQLRGAILGLFEQEL.

The protein belongs to the ArgR family.

The protein resides in the cytoplasm. It participates in amino-acid biosynthesis; L-arginine biosynthesis [regulation]. Its function is as follows. Regulates arginine biosynthesis genes. The chain is Arginine repressor from Photorhabdus laumondii subsp. laumondii (strain DSM 15139 / CIP 105565 / TT01) (Photorhabdus luminescens subsp. laumondii).